The following is a 172-amino-acid chain: RNA silencing suppressor p19 (172 aa).

Residues glutamate 153–glutamate 172 form a disordered region.

Belongs to the tombusvirus protein p19 family. Homodimer.

Its function is as follows. Viral suppressor of RNA silencing which binds specifically to silencing RNAs (siRNAs). Acts as a molecular caliper to specifically select siRNAs based on the length of the duplex region of the RNA. The chain is RNA silencing suppressor p19 from Pelargonium zonale (PeNSV).